A 180-amino-acid polypeptide reads, in one-letter code: Large ribosomal subunit protein uL5 (180 aa).

This sequence belongs to the universal ribosomal protein uL5 family. As to quaternary structure, part of the 50S ribosomal subunit; part of the 5S rRNA/L5/L18/L25 subcomplex. Contacts the 5S rRNA and the P site tRNA. Forms a bridge to the 30S subunit in the 70S ribosome.

Functionally, this is one of the proteins that bind and probably mediate the attachment of the 5S RNA into the large ribosomal subunit, where it forms part of the central protuberance. In the 70S ribosome it contacts protein S13 of the 30S subunit (bridge B1b), connecting the 2 subunits; this bridge is implicated in subunit movement. Contacts the P site tRNA; the 5S rRNA and some of its associated proteins might help stabilize positioning of ribosome-bound tRNAs. This chain is Large ribosomal subunit protein uL5, found in Clostridium botulinum (strain Loch Maree / Type A3).